Here is a 153-residue protein sequence, read N- to C-terminus: Mitochondrial fission 1 protein (153 aa).

Residues 1–124 (MTQLPYAVDA…LIDDKVTKEG (124 aa)) are Cytoplasmic-facing. A TPR repeat occupies 73–106 (RECLYYLALGNYKLGNYAQARKYNDALLENEPAN). The helical transmembrane segment at 125–145 (LMGVAIISGVAVAAGVIGGVL) threads the bilayer. At 146–153 (LRNLGRKR) the chain is on the mitochondrial intermembrane side.

This sequence belongs to the FIS1 family.

It localises to the mitochondrion outer membrane. Functionally, has a role in mitochondrial fission. Has a role in outer membrane fission but not matrix separation. In Neurospora crassa (strain ATCC 24698 / 74-OR23-1A / CBS 708.71 / DSM 1257 / FGSC 987), this protein is Mitochondrial fission 1 protein (mtp-2).